The chain runs to 312 residues: Olfactory receptor 6C76 (312 aa).

Over 1–23 the chain is Extracellular; that stretch reads MKNRTSVTDFILLGLTDNPQLQV. Residue N3 is glycosylated (N-linked (GlcNAc...) asparagine). A helical membrane pass occupies residues 24 to 44; that stretch reads VIFSFLFLTYVLSVTGNLTII. Residues 45–57 are Cytoplasmic-facing; the sequence is SLTLLDSHLKTPM. The helical transmembrane segment at 58–80 threads the bilayer; the sequence is YFFLRNFSLEISFTSVCNPRFLI. Topologically, residues 81 to 94 are extracellular; that stretch reads SILTGDKSISYNAC. C94 and C176 are joined by a disulfide. Residues 95-115 form a helical membrane-spanning segment; that stretch reads AAQLFFFIFLGSTEFFLLASM. The Cytoplasmic segment spans residues 116–142; that stretch reads SYDCYVAICKPLHYTTIMSDRICYQLI. Residues 143-163 form a helical membrane-spanning segment; sequence ISSWLAGFLVIFPPLAMGLQL. Over 164 to 195 the chain is Extracellular; sequence DFCDSNVIDHFTCDSAPLLQISCTDTSTLELM. A helical membrane pass occupies residues 196–216; sequence SFILALFTLISTLILVILSYT. Topologically, residues 217 to 238 are cytoplasmic; it reads YIIRTILRIPSAQQRKKAFSTC. A helical membrane pass occupies residues 239–259; the sequence is SSHVIVVSISYGSCIFMYVKT. Residues 260–267 are Extracellular-facing; the sequence is SAKEGVAL. Residues 268–288 form a helical membrane-spanning segment; sequence TKGVAILNTSVAPMLNPFIYT. Residues 289 to 312 are Cytoplasmic-facing; the sequence is LRNQQVKQAFKDVLRKISHKKKKH.

This sequence belongs to the G-protein coupled receptor 1 family.

The protein resides in the cell membrane. Odorant receptor. The protein is Olfactory receptor 6C76 (OR6C76) of Homo sapiens (Human).